The chain runs to 393 residues: Tryptophan synthase beta chain (393 aa).

N6-(pyridoxal phosphate)lysine is present on lysine 85.

The protein belongs to the TrpB family. As to quaternary structure, tetramer of two alpha and two beta chains. It depends on pyridoxal 5'-phosphate as a cofactor.

It carries out the reaction (1S,2R)-1-C-(indol-3-yl)glycerol 3-phosphate + L-serine = D-glyceraldehyde 3-phosphate + L-tryptophan + H2O. It functions in the pathway amino-acid biosynthesis; L-tryptophan biosynthesis; L-tryptophan from chorismate: step 5/5. The beta subunit is responsible for the synthesis of L-tryptophan from indole and L-serine. The protein is Tryptophan synthase beta chain (trpB) of Helicobacter pylori (strain ATCC 700392 / 26695) (Campylobacter pylori).